The chain runs to 283 residues: NAD kinase (283 aa).

Asp-66 acts as the Proton acceptor in catalysis. NAD(+) contacts are provided by residues 66-67 (DG), 134-135 (ND), Arg-145, Arg-163, Asp-165, and 176-181 (TAYSMS).

Belongs to the NAD kinase family. It depends on a divalent metal cation as a cofactor.

It localises to the cytoplasm. The catalysed reaction is NAD(+) + ATP = ADP + NADP(+) + H(+). Its function is as follows. Involved in the regulation of the intracellular balance of NAD and NADP, and is a key enzyme in the biosynthesis of NADP. Catalyzes specifically the phosphorylation on 2'-hydroxyl of the adenosine moiety of NAD to yield NADP. In Chlorobaculum tepidum (strain ATCC 49652 / DSM 12025 / NBRC 103806 / TLS) (Chlorobium tepidum), this protein is NAD kinase.